The following is a 52-amino-acid chain: uncharacterized protein (52 aa).

The next 2 helical transmembrane spans lie at 4-24 (IIIPAILAIFALWILLQISLE) and 25-45 (MSIVKNPMNYFIVFIIFFLFV).

It is found in the cell membrane. This is an uncharacterized protein from Bacillus subtilis (strain 168).